Reading from the N-terminus, the 491-residue chain is Maintenance of mitochondrial morphology protein 1 (491 aa).

Residues 1-22 (MTFQQNEPSAVPAQSSLSFTQG) are Lumenal-facing. The chain crosses the membrane as a helical span at residues 23 to 43 (FLLGQLSVVLLIGAFIKFFIF). Over 44–491 (GEAPPPPSRG…GTLPGGAAAN (448 aa)) the chain is Cytoplasmic. 3 disordered regions span residues 50-95 (PSRG…PVPS), 275-325 (PPLH…SPKS), and 392-491 (RTGV…AAAN). A compositionally biased stretch (basic residues) spans 54-64 (LSHRASTHRRS). 2 stretches are compositionally biased toward polar residues: residues 65 to 78 (NSIY…GTSR) and 85 to 95 (STSNVLRPVPS). The SMP-LTD domain occupies 131–384 (QPESLDWFNV…EPRVQVVGLP (254 aa)). Positions 275-287 (PPLHTPSPSPSPP) are enriched in pro residues. 2 stretches are compositionally biased toward polar residues: residues 300–315 (TNGS…NAQE) and 403–412 (TGSNAASRSA). Basic and acidic residues predominate over residues 422 to 434 (RADDIGREPDGLR).

Belongs to the MMM1 family. As to quaternary structure, homodimer. Component of the ER-mitochondria encounter structure (ERMES) or MDM complex, composed of mmm1, mdm10, mdm12 and mdm34. A mmm1 homodimer associates with one molecule of mdm12 on each side in a pairwise head-to-tail manner, and the SMP-LTD domains of mmm1 and mdm12 generate a continuous hydrophobic tunnel for phospholipid trafficking.

The protein localises to the endoplasmic reticulum membrane. Functionally, component of the ERMES/MDM complex, which serves as a molecular tether to connect the endoplasmic reticulum (ER) and mitochondria. Components of this complex are involved in the control of mitochondrial shape and protein biogenesis, and function in nonvesicular lipid trafficking between the ER and mitochondria. The mdm12-mmm1 subcomplex functions in the major beta-barrel assembly pathway that is responsible for biogenesis of all outer membrane beta-barrel proteins, and acts in a late step after the SAM complex. The mdm10-mdm12-mmm1 subcomplex further acts in the TOM40-specific pathway after the action of the mdm12-mmm1 complex. Essential for establishing and maintaining the structure of mitochondria and maintenance of mtDNA nucleoids. This Aspergillus flavus (strain ATCC 200026 / FGSC A1120 / IAM 13836 / NRRL 3357 / JCM 12722 / SRRC 167) protein is Maintenance of mitochondrial morphology protein 1.